The sequence spans 359 residues: Aromatic amino acid aminotransferase (359 aa).

A disordered region spans residues 1–42 (MSERKPPYLRSALDSIPPYRPGRKVVGPDGRSAKLSSNESPF). Lys-223 is subject to N6-(pyridoxal phosphate)lysine.

The protein belongs to the class-II pyridoxal-phosphate-dependent aminotransferase family. As to quaternary structure, homodimer. The cofactor is pyridoxal 5'-phosphate.

The catalysed reaction is an aromatic L-alpha-amino acid + 2-oxoglutarate = an aromatic oxo-acid + L-glutamate. Aminotransferase that catalyzes the conversion of aromatic amino acids and 2-oxoglutarate into corresponding aromatic oxo acids and L-glutamate. In Thermobifida fusca (strain YX), this protein is Aromatic amino acid aminotransferase.